The primary structure comprises 999 residues: MDRLLNCPNCLKVFNNPRQLECDHILCTRCIEGVYNPGRTPIIKCPVCDKHSIVITSIDKSFPLIHCIEELLTYKYKDCNYDDSLSIPLNNSTGSSNNNNNNNNNNNNNNNNFVINNSNNKNNGATTTTTTTTTTTNSNSNSTKSKVVVNDSSPNLISASPKGLGSSQGSLTTINNQKKLTLSPQRASSTTTTSVNKPPLKLKAISSPPITPNVSTPERCFVINDKNKHVMISSETTIHNVSGLSSISTPIVSDAAIAELSKCNDHDQKKFTIFCTDCDQLLCDECLNNNQQQHENHQLNKIIQEAEKRIGDIESMIITTSLCPNRLINKKNKIEKIIQDSALVLKDTKLKITTDIDTMIENLKERKNALISQIDKEYEEQKLELKDQIETINTTIVDIQNNTSITQGIVSLYLNQVDSEMLSTSLLKKYSDLKRMDQLSDKLSNNLEQNIEWKWEPEYHFPQLFTRSNGEKTTVVYRTKRVSVGVSSSPTGTGSNGTPQQQQQQSANGNPTIITTPPLPPISANSPSPTSSSSSTLIGNIIKRSSPPHLPLSSQNYDNFGSTPPRLTTKLSSPNLSISMPTFPQSNSVQQNGSTSSIMKQQSHGSKLNDNINTNNNNSPSPTSSSTTSTNGSNTKIQLKNPVFGKLLTRKDSVITARRNWIYGFSDHQVEIYDNVTKVWRGGSKIPKKSIEYSSIYDNNCTIYRFGGKETPNDIYCYNVDRDIWEHNKVKIPSKRNAHCSVFDGLRYIYLIGGADRDSSKLLERFDIETQQWTKLASMKFGRSYFNAFYHPTKRCIYVLDGYVNKDKKSSVEMYSLEKNQWSVICEINQPRYLSGVSFDGSKYINIIGGVDRSNSRDIKTMERFDTSTHKWEILNNEPKSLLSHTSSSMNLMVVQSPQLKKNNSFSSISSHSSLNSSSSNNGISGSGGSGGDNEIPTEKMQFFNTSFFDGEQFIFFYGINIDEHGPLLYKFSIKTKKFEKIPIDNTLDLFSTLIFVSK.

Residues 7–49 form an RING-type zinc finger; it reads CPNCLKVFNNPRQLECDHILCTRCIEGVYNPGRTPIIKCPVCD. Residues 92–143 are compositionally biased toward low complexity; the sequence is STGSSNNNNNNNNNNNNNNNNFVINNSNNKNNGATTTTTTTTTTTNSNSNST. Disordered regions lie at residues 92–147 and 159–209; these read STGS…KSKV and ASPK…SSPP. Polar residues predominate over residues 165 to 196; it reads GSSQGSLTTINNQKKLTLSPQRASSTTTTSVN. Residues 258-302 form a B box-type zinc finger; sequence AELSKCNDHDQKKFTIFCTDCDQLLCDECLNNNQQQHENHQLNKI. Zn(2+) is bound by residues Cys-263, His-266, Cys-286, and His-294. Positions 355 to 402 form a coiled coil; that stretch reads DIDTMIENLKERKNALISQIDKEYEEQKLELKDQIETINTTIVDIQNN. 2 stretches are compositionally biased toward low complexity: residues 485 to 516 and 526 to 536; these read GVSS…IITT and SPSPTSSSSST. The segment at 485–637 is disordered; sequence GVSSSPTGTG…TSTNGSNTKI (153 aa). The segment covering 552 to 612 has biased composition (polar residues); that stretch reads LSSQNYDNFG…SHGSKLNDNI (61 aa). A compositionally biased stretch (low complexity) spans 613–635; the sequence is NTNNNNSPSPTSSSTTSTNGSNT. Kelch repeat units lie at residues 655–700, 702–745, 748–793, 796–842, and 844–892; these read ITAR…YDNN, TIYR…VFDG, YIYL…YHPT, CIYV…FDGS, and YINI…SMNL. Residues 904–924 show a composition bias toward low complexity; it reads NSFSSISSHSSLNSSSSNNGI. Residues 904 to 936 form a disordered region; the sequence is NSFSSISSHSSLNSSSSNNGISGSGGSGGDNEI.

This Dictyostelium discoideum (Social amoeba) protein is RING finger domain and kelch repeat-containing protein DDB_G0271372.